Here is a 392-residue protein sequence, read N- to C-terminus: Phosphoglycerate kinase (392 aa).

Substrate is bound by residues Asp-21 to Asn-23, Arg-36, His-59 to Arg-62, Arg-118, and Arg-151. ATP is bound by residues Lys-201, Gly-292, Glu-323, and Gly-349–Ser-352.

The protein belongs to the phosphoglycerate kinase family. In terms of assembly, monomer.

The protein localises to the cytoplasm. The catalysed reaction is (2R)-3-phosphoglycerate + ATP = (2R)-3-phospho-glyceroyl phosphate + ADP. It participates in carbohydrate degradation; glycolysis; pyruvate from D-glyceraldehyde 3-phosphate: step 2/5. In Borrelia turicatae (strain 91E135), this protein is Phosphoglycerate kinase.